We begin with the raw amino-acid sequence, 509 residues long: Protein OS-9 homolog (509 aa).

A signal peptide spans 1-23 (MRRQSRIVASLLVLACASSGAFA). Polar residues predominate over residues 64–74 (SPDLNDISEQT). The segment at 64–91 (SPDLNDISEQTPLKDESEESIRDGSSGE) is disordered. The segment covering 75–91 (PLKDESEESIRDGSSGE) has biased composition (basic and acidic residues). Asn120 carries N-linked (GlcNAc...) asparagine glycosylation. The MRH domain maps to 151 to 291 (GKCLYYISGW…LIYTPRLCND (141 aa)). A disulfide bond links Cys153 and Cys166. A mannooligosaccharide derivative is bound by residues Trp160, Trp161, Gln173, Asp246, Arg252, Glu273, and Tyr279. Cystine bridges form between Cys245–Cys277 and Cys260–Cys289. Residues 433-509 (GVVDTDEDEE…GSEEIFKDEL (77 aa)) form a disordered region. Residues 436-451 (DTDEDEEDGYENEEGE) show a composition bias toward acidic residues. The span at 452 to 461 (TDKREQRENT) shows a compositional bias: basic and acidic residues. Over residues 489–502 (RSEDGEDPDVDGSE) the composition is skewed to acidic residues. The Prevents secretion from ER motif lies at 506 to 509 (KDEL).

It belongs to the OS-9 family. Interacts with missfolded ER lumenal proteins.

It localises to the endoplasmic reticulum membrane. In terms of biological role, lectin involved in the quality control of the secretory pathway. As a member of the endoplasmic reticulum-associated degradation lumenal (ERAD-L) surveillance system, targets misfolded endoplasmic reticulum lumenal glycoproteins for degradation. This is Protein OS-9 homolog (yos9) from Emericella nidulans (strain FGSC A4 / ATCC 38163 / CBS 112.46 / NRRL 194 / M139) (Aspergillus nidulans).